Reading from the N-terminus, the 1026-residue chain is MPSMLVLVGTMPSLASLVSLGGACASVSGTSSSDASYALVKRVSLSRRSVKGTKKWLCRYSVSSSTTTTTADFIADQNNNSVSIDSNSFRGSKDGDDSEVVLKQTPKPVLKPPVARVERGLGVNTAPWSKDLSNGGKFDGEEERNKVIESLGEVLDKAEKLEIPKPGNKEGGEAVKPSQPSANSSNSRNGSYANASDGGTRKTKTMKSVWRKGDAVAAVQKVVKESPKIFNRGVQTEPRTREEGEVNAKAGTPLAPPQPPFRPQPPVRPQPMLQGKPMVAPPVKKSPILKDLGMAAKPLVSEEVDSSVKSKERKPILVDKFASKKKGVDPAASQAVLAPTKPGKGPPSNKFRVEHRNKKNASASPRRRIVAEDDGDDDASISRSGRKGRKWSKASRKAVRLQAAKDAAPVKAEILEVEEEGMSIEDLAYNLAIGEGDILGYLYSKGIRPDGVHTLDREMVKMICRDYDVEVLDADSVKVEEMAKKRQTFDEEDLDKLEDRPPVITIMGHVDHGKTTLLDYIRKSKVAASEAGGITQGIGAYKVSVPVDGKLQSCVFLDTPGHEAFGAMRARGARVTDIAIIVVAADDGIRPQTNEAIAHAKAAAVPIVIAINKIDKEGASPDRVMQELSSIGLMPEDWGGDVPMVQISALKGENVDDLLETVMLVAELQELKANPHRNAKGIVIEAGLDKAKGPFATFIVQKGTLKRGDVVVCGEAFGKVRALFDHSGERVDEAGPSIPVQVIGLNNVPIAGDEFEIVSSLDVAREMAEARAVSLRDERISAKAGDGKVTLSSLASAVSAKKMSGLDLHQLNIILKVDVQGSIEAVRQALQVLPQENVTLKFLLQATGDVSNSDVDLASASEAIVFGFNVKASGSVKKAAENKGVEIRLYRVIYELIDDVRNAMEGLLESVEEQIPIGSAEVRATFSSGSGRVAGCMVNEGKFVKDCGIRVVRKGKTVHVGVLDSLKRVKENVKEVSAGLECGIGMDDYDDWIEGDIIEAFNAVQKRRTLEEASASMSAAIEEAGV.

The N-terminal 63 residues, 1 to 63 (MPSMLVLVGT…KKWLCRYSVS (63 aa)), are a transit peptide targeting the chloroplast. The segment covering 158–173 (AEKLEIPKPGNKEGGE) has biased composition (basic and acidic residues). Disordered stretches follow at residues 158–208 (AEKL…TMKS), 230–284 (FNRG…PPVK), and 300–393 (VSEE…KWSK). Positions 178 to 194 (SQPSANSSNSRNGSYAN) are enriched in polar residues. Over residues 254–269 (LAPPQPPFRPQPPVRP) the composition is skewed to pro residues. The segment covering 306-317 (SSVKSKERKPIL) has biased composition (basic and acidic residues). Positions 384–393 (SGRKGRKWSK) are enriched in basic residues. The region spanning 499–672 (DRPPVITIMG…MLVAELQELK (174 aa)) is the tr-type G domain. The G1 stretch occupies residues 508–515 (GHVDHGKT). 508–515 (GHVDHGKT) is a GTP binding site. The segment at 533-537 (GITQG) is G2. Residues 558-561 (DTPG) are G3. Residues 558 to 562 (DTPGH) and 612 to 615 (NKID) contribute to the GTP site. A G4 region spans residues 612–615 (NKID). Residues 648 to 650 (SAL) are G5.

Belongs to the TRAFAC class translation factor GTPase superfamily. Classic translation factor GTPase family. IF-2 subfamily.

Its subcellular location is the plastid. It is found in the chloroplast. Its function is as follows. One of the essential components for the initiation of protein synthesis. Protects formylmethionyl-tRNA from spontaneous hydrolysis and promotes its binding to the 30S ribosomal subunits. Also involved in the hydrolysis of GTP during the formation of the 70S ribosomal complex. The chain is Translation initiation factor IF-2, chloroplastic from Arabidopsis thaliana (Mouse-ear cress).